The chain runs to 328 residues: MRIIFWGTPEYSIASLDIFIKSKHEVIGVVSQPDKKRSRGNKLISSPVKSFAEQESIKIYTPVKIRDNIHFINELKSLSCDLFIVIAYGKILPKEILEIPKFGCWNAHASLLPRWRGAAPIQWSLIKGDKFTGVGIMKMNEGLDTGDLLLEEKIKIGNEDNLNTLSEKLSILSAKLFLKAASLLEENFYKNTKSQLTKQNSLGREITYARMIEKSDFRVDWGNQAIAISQKIKGLYPRANTIFRGKNLKILKIKVLSSDEIKNEKYLFMSDYSRPGIILAVIEDEGIIISTKTDPIILLEAKLEGKNISSKKQLIQQLKPSVGEYLSD.

Residue 110-113 participates in (6S)-5,6,7,8-tetrahydrofolate binding; that stretch reads SLLP.

Belongs to the Fmt family.

The catalysed reaction is L-methionyl-tRNA(fMet) + (6R)-10-formyltetrahydrofolate = N-formyl-L-methionyl-tRNA(fMet) + (6S)-5,6,7,8-tetrahydrofolate + H(+). Attaches a formyl group to the free amino group of methionyl-tRNA(fMet). The formyl group appears to play a dual role in the initiator identity of N-formylmethionyl-tRNA by promoting its recognition by IF2 and preventing the misappropriation of this tRNA by the elongation apparatus. The polypeptide is Methionyl-tRNA formyltransferase (Prochlorococcus marinus (strain AS9601)).